The chain runs to 662 residues: DNA ligase (662 aa).

NAD(+)-binding positions include 31–35 (DSEYD), 79–80 (SL), and Glu119. The active-site N6-AMP-lysine intermediate is the Lys121. NAD(+) is bound by residues Arg142, Glu176, Lys288, and Lys312. Zn(2+)-binding residues include Cys405, Cys408, Cys421, and Cys427. In terms of domain architecture, BRCT spans 583–662 (NIEKKLDNLT…DELNSFLDNL (80 aa)).

The protein belongs to the NAD-dependent DNA ligase family. LigA subfamily. Requires Mg(2+) as cofactor. Mn(2+) is required as a cofactor.

It carries out the reaction NAD(+) + (deoxyribonucleotide)n-3'-hydroxyl + 5'-phospho-(deoxyribonucleotide)m = (deoxyribonucleotide)n+m + AMP + beta-nicotinamide D-nucleotide.. Its function is as follows. DNA ligase that catalyzes the formation of phosphodiester linkages between 5'-phosphoryl and 3'-hydroxyl groups in double-stranded DNA using NAD as a coenzyme and as the energy source for the reaction. It is essential for DNA replication and repair of damaged DNA. The polypeptide is DNA ligase (Finegoldia magna (strain ATCC 29328 / DSM 20472 / WAL 2508) (Peptostreptococcus magnus)).